The chain runs to 672 residues: Penicillin-binding protein activator LpoA (672 aa).

Residues 1–26 (MLPFHLVRTQAGRVIPVLLAALFLAG) form the signal peptide. Residue Cys27 is the site of N-palmitoyl cysteine attachment. Residue Cys27 is the site of S-diacylglycerol cysteine attachment. Positions 298–336 (APPTDTAQAGQVTPSSDGQNAQSPAPYSDQAVASTTPAP) are disordered. Over residues 305 to 322 (QAGQVTPSSDGQNAQSPA) the composition is skewed to polar residues. Positions 327-336 (QAVASTTPAP) are enriched in low complexity.

Belongs to the LpoA family. In terms of assembly, interacts with PBP1a.

It is found in the cell outer membrane. Regulator of peptidoglycan synthesis that is essential for the function of penicillin-binding protein 1A (PBP1a). This chain is Penicillin-binding protein activator LpoA, found in Pectobacterium parmentieri (strain WPP163) (Pectobacterium wasabiae (strain WPP163)).